A 1427-amino-acid chain; its full sequence is DNA-directed RNA polymerase subunit beta' (1427 aa).

Zn(2+) contacts are provided by C70, C72, C85, and C88. Mg(2+) contacts are provided by D461, D463, and D465. Residues C809, C882, C889, and C892 each contribute to the Zn(2+) site. The interval 1394–1427 (EAAIGDDPLGKVQGEDFTTDDVMVEERPEGASEE) is disordered. Basic and acidic residues predominate over residues 1417-1427 (VEERPEGASEE).

It belongs to the RNA polymerase beta' chain family. The RNAP catalytic core consists of 2 alpha, 1 beta, 1 beta' and 1 omega subunit. When a sigma factor is associated with the core the holoenzyme is formed, which can initiate transcription. Requires Mg(2+) as cofactor. The cofactor is Zn(2+).

It catalyses the reaction RNA(n) + a ribonucleoside 5'-triphosphate = RNA(n+1) + diphosphate. In terms of biological role, DNA-dependent RNA polymerase catalyzes the transcription of DNA into RNA using the four ribonucleoside triphosphates as substrates. The protein is DNA-directed RNA polymerase subunit beta' of Sphingopyxis alaskensis (strain DSM 13593 / LMG 18877 / RB2256) (Sphingomonas alaskensis).